Consider the following 299-residue polypeptide: ATP phosphoribosyltransferase (299 aa).

The protein belongs to the ATP phosphoribosyltransferase family. Long subfamily. As to quaternary structure, equilibrium between an active dimeric form, an inactive hexameric form and higher aggregates. Interconversion between the various forms is largely reversible and is influenced by the natural substrates and inhibitors of the enzyme. Mg(2+) is required as a cofactor.

It localises to the cytoplasm. It carries out the reaction 1-(5-phospho-beta-D-ribosyl)-ATP + diphosphate = 5-phospho-alpha-D-ribose 1-diphosphate + ATP. The protein operates within amino-acid biosynthesis; L-histidine biosynthesis; L-histidine from 5-phospho-alpha-D-ribose 1-diphosphate: step 1/9. With respect to regulation, feedback inhibited by histidine. Its function is as follows. Catalyzes the condensation of ATP and 5-phosphoribose 1-diphosphate to form N'-(5'-phosphoribosyl)-ATP (PR-ATP). Has a crucial role in the pathway because the rate of histidine biosynthesis seems to be controlled primarily by regulation of HisG enzymatic activity. The polypeptide is ATP phosphoribosyltransferase (Pectobacterium atrosepticum (strain SCRI 1043 / ATCC BAA-672) (Erwinia carotovora subsp. atroseptica)).